The chain runs to 503 residues: Probable Xaa-Pro aminopeptidase TSTA_094700 (503 aa).

Residues D277, D288, E428, and E467 each contribute to the Mn(2+) site.

Belongs to the peptidase M24B family. Requires Mn(2+) as cofactor.

It carries out the reaction Release of any N-terminal amino acid, including proline, that is linked to proline, even from a dipeptide or tripeptide.. Catalyzes the removal of a penultimate prolyl residue from the N-termini of peptides. In Talaromyces stipitatus (strain ATCC 10500 / CBS 375.48 / QM 6759 / NRRL 1006) (Penicillium stipitatum), this protein is Probable Xaa-Pro aminopeptidase TSTA_094700.